The chain runs to 465 residues: Cysteine--tRNA ligase (465 aa).

Position 30 (C30) interacts with Zn(2+). Positions 32–42 (ITVYDYCHVGH) match the 'HIGH' region motif. The Zn(2+) site is built by C214, H239, and E243. A 'KMSKS' region motif is present at residues 271–275 (KMSKS). Position 274 (K274) interacts with ATP.

This sequence belongs to the class-I aminoacyl-tRNA synthetase family. Monomer. The cofactor is Zn(2+).

It is found in the cytoplasm. It catalyses the reaction tRNA(Cys) + L-cysteine + ATP = L-cysteinyl-tRNA(Cys) + AMP + diphosphate. The chain is Cysteine--tRNA ligase from Burkholderia multivorans (strain ATCC 17616 / 249).